The primary structure comprises 399 residues: Bombesin receptor subtype-3 (399 aa).

At 1–41 (MSQRQSQSPNQTLISITNDTETSSSVVSNDTTHKGWTGDNS) the chain is on the extracellular side. 3 N-linked (GlcNAc...) asparagine glycosylation sites follow: asparagine 10, asparagine 18, and asparagine 29. The helical transmembrane segment at 42 to 63 (PGIEALCAIYITYAGIISVGIL) threads the bilayer. Residues 64–82 (GNAILIKVFFKTKSMQTVP) are Cytoplasmic-facing. The helical transmembrane segment at 83-103 (NIFITSLAFGDLLLLLTCVPV) threads the bilayer. At 104–121 (DATHYLAEGWLFGKVGCK) the chain is on the extracellular side. The cysteines at positions 120 and 203 are disulfide-linked. A helical membrane pass occupies residues 122-143 (VLSFIRLTSVGVSVFTLTILSA). Over 144–163 (DRYKAVVKPLERQPPNAILK) the chain is Cytoplasmic. The chain crosses the membrane as a helical span at residues 164–184 (TCAKAGGIWIVSMIFALPEAI). The Extracellular segment spans residues 185–220 (FSNVYTFQDPNRNVTFESCNSYPISERLLQEIHSLL). Residues 221 to 241 (CFLVFYIIPLSIISVYYSLIA) form a helical membrane-spanning segment. Over 242–272 (RTLYKSTLNIPTEEQSHARKQIESRKRIAKT) the chain is Cytoplasmic. Residues 273 to 293 (VLVLVALFALCWLPNHLLYLY) traverse the membrane as a helical segment. At 294 to 313 (HSFTYESYANHSDVPFVIII) the chain is on the extracellular side. A helical transmembrane segment spans residues 314-333 (FSRVLAFSNSCVNPFALYWL). Residues 334-399 (SKTFQQHFKA…SSAKKGEDKV (66 aa)) lie on the Cytoplasmic side of the membrane. Cysteine 347 carries the S-palmitoyl cysteine lipid modification.

This sequence belongs to the G-protein coupled receptor 1 family. In terms of assembly, interacts with C6orf89.

Its subcellular location is the cell membrane. In terms of biological role, role in sperm cell division, maturation, or function. This receptor mediates its action by association with G proteins that activate a phosphatidylinositol-calcium second messenger system. The protein is Bombesin receptor subtype-3 (Brs3) of Mus musculus (Mouse).